We begin with the raw amino-acid sequence, 525 residues long: GMP synthase [glutamine-hydrolyzing] (525 aa).

The Glutamine amidotransferase type-1 domain occupies 9-207; that stretch reads RILILDFGSQ…VLDICGCEAL (199 aa). The active-site Nucleophile is Cys-86. Residues His-181 and Glu-183 contribute to the active site. One can recognise a GMPS ATP-PPase domain in the interval 208–400; sequence WTPSKIAEDA…LGLPYDMVYR (193 aa). 235 to 241 provides a ligand contact to ATP; it reads SGGVDSS.

As to quaternary structure, homodimer.

The catalysed reaction is XMP + L-glutamine + ATP + H2O = GMP + L-glutamate + AMP + diphosphate + 2 H(+). Its pathway is purine metabolism; GMP biosynthesis; GMP from XMP (L-Gln route): step 1/1. Its function is as follows. Catalyzes the synthesis of GMP from XMP. This Pseudomonas fluorescens (strain Pf0-1) protein is GMP synthase [glutamine-hydrolyzing].